Here is a 264-residue protein sequence, read N- to C-terminus: Merozoite surface protein 2 (264 aa).

Residues 1 to 20 form the signal peptide; that stretch reads MKVIKTLSIINFFIFVTFNI. N-linked (GlcNAc...) asparagine glycans are attached at residues N22 and N36. The tract at residues 44–190 is polymorphic region; the sequence is ANEGSNTNSV…PQTAENENPA (147 aa). The segment at 46–227 is disordered; sequence EGSNTNSVGA…QKECTDGNKE (182 aa). Repeat copies occupy residues 60 to 91 and 92 to 123. The 2 X 32 AA perfects repeats stretch occupies residues 60–123; that stretch reads ADTIASGSQR…GESQTTTPTA (64 aa). Low complexity predominate over residues 70–81; it reads STNSASTSTTNN. Residues 82 to 101 show a composition bias toward polar residues; sequence GESQTTTPTAADTIASGSQR. The span at 102–145 shows a compositional bias: low complexity; it reads STNSASTSTTNNGESQTTTPTAADTPTATESISPSPPITTTESS. The segment covering 154-166 has biased composition (basic and acidic residues); sequence TDGKGEESEKQNE. Residue N213 is glycosylated (N-linked (GlcNAc...) asparagine). Basic and acidic residues predominate over residues 217-226; that stretch reads SQKECTDGNK. C221 and C229 are disulfide-bonded. N238 is a glycosylation site (N-linked (GlcNAc...) asparagine). The GPI-anchor amidated asparagine moiety is linked to residue N238. Residues 239 to 264 constitute a propeptide, removed in mature form; the sequence is SSNIASINKFVVLISATLVLSFAIFI.

The protein resides in the cell membrane. Its function is as follows. May play a role in the merozoite attachment to the erythrocyte. This Plasmodium falciparum (isolate FC27 / Papua New Guinea) protein is Merozoite surface protein 2.